A 389-amino-acid chain; its full sequence is Arrestin-C (389 aa).

This sequence belongs to the arrestin family. As to expression, retina and pineal gland.

In terms of biological role, may play a role in an as yet undefined retina-specific signal transduction. Could bind to photoactivated-phosphorylated red/green opsins. The chain is Arrestin-C (arr3) from Lithobates pipiens (Northern leopard frog).